The chain runs to 275 residues: NH(3)-dependent NAD(+) synthetase (275 aa).

46–53 (GISGGQDS) contributes to the ATP binding site. Asp-52 contacts Mg(2+). Position 140 (Arg-140) interacts with deamido-NAD(+). ATP is bound at residue Thr-160. Glu-165 is a Mg(2+) binding site. Deamido-NAD(+) is bound by residues Lys-173 and Asp-180. The ATP site is built by Lys-189 and Thr-211. 260-261 (HK) is a binding site for deamido-NAD(+).

The protein belongs to the NAD synthetase family. As to quaternary structure, homodimer.

The enzyme catalyses deamido-NAD(+) + NH4(+) + ATP = AMP + diphosphate + NAD(+) + H(+). It participates in cofactor biosynthesis; NAD(+) biosynthesis; NAD(+) from deamido-NAD(+) (ammonia route): step 1/1. Its function is as follows. Catalyzes the ATP-dependent amidation of deamido-NAD to form NAD. Uses ammonia as a nitrogen source. This Escherichia fergusonii (strain ATCC 35469 / DSM 13698 / CCUG 18766 / IAM 14443 / JCM 21226 / LMG 7866 / NBRC 102419 / NCTC 12128 / CDC 0568-73) protein is NH(3)-dependent NAD(+) synthetase.